The sequence spans 135 residues: Ribosome-binding factor A (135 aa).

This sequence belongs to the RbfA family. Monomer. Binds 30S ribosomal subunits, but not 50S ribosomal subunits or 70S ribosomes.

The protein localises to the cytoplasm. Functionally, one of several proteins that assist in the late maturation steps of the functional core of the 30S ribosomal subunit. Associates with free 30S ribosomal subunits (but not with 30S subunits that are part of 70S ribosomes or polysomes). Required for efficient processing of 16S rRNA. May interact with the 5'-terminal helix region of 16S rRNA. The chain is Ribosome-binding factor A from Aliivibrio fischeri (strain MJ11) (Vibrio fischeri).